Reading from the N-terminus, the 327-residue chain is Zinc transport protein ZntB (327 aa).

The Cytoplasmic portion of the chain corresponds to 1–273 (MEAIKGSDVN…ARRTYTMSLM (273 aa)). Residues 274–294 (AMVFLPSTFLTGLFGVNLGGI) form a helical membrane-spanning segment. Residues 295-300 (PGGGWR) lie on the Periplasmic side of the membrane. A helical membrane pass occupies residues 301-321 (FGFSLFCILLVVLIGGVTLWL). The Cytoplasmic segment spans residues 322-327 (HRSKWL).

This sequence belongs to the CorA metal ion transporter (MIT) (TC 1.A.35) family.

It is found in the cell inner membrane. It catalyses the reaction Zn(2+)(out) + H(+)(out) = Zn(2+)(in) + H(+)(in). Zinc transporter. Acts as a Zn(2+):proton symporter, which likely mediates zinc ion uptake. This Salmonella choleraesuis (strain SC-B67) protein is Zinc transport protein ZntB.